The primary structure comprises 375 residues: Alanine racemase (375 aa).

K35 functions as the Proton acceptor; specific for D-alanine in the catalytic mechanism. K35 carries the post-translational modification N6-(pyridoxal phosphate)lysine. Residue R133 coordinates substrate. Catalysis depends on Y261, which acts as the Proton acceptor; specific for L-alanine. A substrate-binding site is contributed by M309.

It belongs to the alanine racemase family. It depends on pyridoxal 5'-phosphate as a cofactor.

The catalysed reaction is L-alanine = D-alanine. Its pathway is amino-acid biosynthesis; D-alanine biosynthesis; D-alanine from L-alanine: step 1/1. Catalyzes the interconversion of L-alanine and D-alanine. May also act on other amino acids. The chain is Alanine racemase (alr) from Syntrophobacter fumaroxidans (strain DSM 10017 / MPOB).